Reading from the N-terminus, the 215-residue chain is Translation initiation factor 6 (215 aa).

The protein belongs to the eIF-6 family.

In terms of biological role, binds to the 50S ribosomal subunit and prevents its association with the 30S ribosomal subunit to form the 70S initiation complex. In Archaeoglobus fulgidus (strain ATCC 49558 / DSM 4304 / JCM 9628 / NBRC 100126 / VC-16), this protein is Translation initiation factor 6.